Reading from the N-terminus, the 403-residue chain is Acetylornithine aminotransferase (403 aa).

Residues 107–108 (GA) and Phe140 contribute to the pyridoxal 5'-phosphate site. Residue Arg143 coordinates N(2)-acetyl-L-ornithine. Residue 225 to 228 (DEVQ) participates in pyridoxal 5'-phosphate binding. Lys254 carries the post-translational modification N6-(pyridoxal phosphate)lysine. Residue Ser282 participates in N(2)-acetyl-L-ornithine binding. Residue Thr283 coordinates pyridoxal 5'-phosphate.

It belongs to the class-III pyridoxal-phosphate-dependent aminotransferase family. ArgD subfamily. In terms of assembly, homodimer. Pyridoxal 5'-phosphate serves as cofactor.

It localises to the cytoplasm. The catalysed reaction is N(2)-acetyl-L-ornithine + 2-oxoglutarate = N-acetyl-L-glutamate 5-semialdehyde + L-glutamate. It participates in amino-acid biosynthesis; L-arginine biosynthesis; N(2)-acetyl-L-ornithine from L-glutamate: step 4/4. The protein is Acetylornithine aminotransferase of Vibrio vulnificus (strain YJ016).